Reading from the N-terminus, the 149-residue chain is Arginine repressor (149 aa).

Belongs to the ArgR family.

The protein resides in the cytoplasm. Its pathway is amino-acid biosynthesis; L-arginine biosynthesis [regulation]. Functionally, regulates arginine biosynthesis genes. The protein is Arginine repressor of Exiguobacterium sibiricum (strain DSM 17290 / CCUG 55495 / CIP 109462 / JCM 13490 / 255-15).